The chain runs to 125 residues: Glycine cleavage system H protein (125 aa).

One can recognise a Lipoyl-binding domain in the interval 22 to 103; the sequence is VFVVGITENA…AFTAWIFKIK (82 aa). K63 bears the N6-lipoyllysine mark.

Belongs to the GcvH family. The glycine cleavage system is composed of four proteins: P, T, L and H. Requires (R)-lipoate as cofactor.

Its function is as follows. The glycine cleavage system catalyzes the degradation of glycine. The H protein shuttles the methylamine group of glycine from the P protein to the T protein. The polypeptide is Glycine cleavage system H protein (Bordetella avium (strain 197N)).